The sequence spans 349 residues: Cytoplasmic tRNA 2-thiolation protein 2 (349 aa).

The protein belongs to the CTU2/NCS2 family.

It localises to the cytoplasm. Its pathway is tRNA modification; 5-methoxycarbonylmethyl-2-thiouridine-tRNA biosynthesis. In terms of biological role, plays a central role in 2-thiolation of mcm(5)S(2)U at tRNA wobble positions of tRNA(Lys), tRNA(Glu) and tRNA(Gln). May act by forming a heterodimer with tut-1/ctu-1 that ligates sulfur from thiocarboxylated urm-1 onto the uridine of tRNAs at wobble position. This is Cytoplasmic tRNA 2-thiolation protein 2 from Caenorhabditis elegans.